The sequence spans 530 residues: Arginine--tRNA ligase (530 aa).

The 'HIGH' region signature appears at 113 to 123; the sequence is ANPTGPLHIGH.

It belongs to the class-I aminoacyl-tRNA synthetase family. Monomer.

The protein resides in the cytoplasm. The catalysed reaction is tRNA(Arg) + L-arginine + ATP = L-arginyl-tRNA(Arg) + AMP + diphosphate. The protein is Arginine--tRNA ligase of Campylobacter jejuni subsp. doylei (strain ATCC BAA-1458 / RM4099 / 269.97).